A 254-amino-acid chain; its full sequence is MYSSYSLSKRLVSIPILAIQLLLIRSVSSLNLTNDYLNHKCLVSQGKYRPGDKYEDNLNFLTREVLSYNFPTGFIHISYGEAPSFVAIILQCRGDSYDSKCLSCYATALSGLRRRCQRNKGRVIWYDQCFLFINSIRSSPRKNDYRNVFSMHNPNNMIEDTELFNKKTRDFLYELMLEATTPNRTMMLYAAGEKKLGTKKLYAMVQCAQDILRCKGCLEWSINELSKCCHGKQGARVLGTECTLRYELYPFLRS.

Residues 1 to 29 (MYSSYSLSKRLVSIPILAIQLLLIRSVSS) form the signal peptide. Gnk2-homologous domains follow at residues 36–138 (YLNH…SIRS) and 145–251 (YRNV…LYPF).

It belongs to the cysteine-rich repeat secretory protein family.

Its subcellular location is the secreted. This Arabidopsis thaliana (Mouse-ear cress) protein is Putative cysteine-rich repeat secretory protein 37 (CRRSP37).